We begin with the raw amino-acid sequence, 223 residues long: Endonuclease V (223 aa).

Positions 44 and 109 each coordinate Mg(2+).

The protein belongs to the endonuclease V family. The cofactor is Mg(2+).

It is found in the cytoplasm. It catalyses the reaction Endonucleolytic cleavage at apurinic or apyrimidinic sites to products with a 5'-phosphate.. DNA repair enzyme involved in the repair of deaminated bases. Selectively cleaves double-stranded DNA at the second phosphodiester bond 3' to a deoxyinosine leaving behind the intact lesion on the nicked DNA. In Methanothrix thermoacetophila (strain DSM 6194 / JCM 14653 / NBRC 101360 / PT) (Methanosaeta thermophila), this protein is Endonuclease V.